A 451-amino-acid chain; its full sequence is UDP-N-acetylmuramoylalanine--D-glutamate ligase (451 aa).

Residue 118 to 124 (GTKGKST) coordinates ATP.

It belongs to the MurCDEF family.

The protein resides in the cytoplasm. The enzyme catalyses UDP-N-acetyl-alpha-D-muramoyl-L-alanine + D-glutamate + ATP = UDP-N-acetyl-alpha-D-muramoyl-L-alanyl-D-glutamate + ADP + phosphate + H(+). Its pathway is cell wall biogenesis; peptidoglycan biosynthesis. Cell wall formation. Catalyzes the addition of glutamate to the nucleotide precursor UDP-N-acetylmuramoyl-L-alanine (UMA). This is UDP-N-acetylmuramoylalanine--D-glutamate ligase from Borreliella afzelii (strain PKo) (Borrelia afzelii).